A 236-amino-acid chain; its full sequence is Octanoyltransferase (236 aa).

The BPL/LPL catalytic domain occupies 36-220 (DQVPDTVLLL…HLAAVLGASS (185 aa)). Substrate is bound by residues 76 to 83 (RGGKITWH), 150 to 152 (AIG), and 163 to 165 (GFA). C181 serves as the catalytic Acyl-thioester intermediate.

The protein belongs to the LipB family.

The protein localises to the cytoplasm. It carries out the reaction octanoyl-[ACP] + L-lysyl-[protein] = N(6)-octanoyl-L-lysyl-[protein] + holo-[ACP] + H(+). It functions in the pathway protein modification; protein lipoylation via endogenous pathway; protein N(6)-(lipoyl)lysine from octanoyl-[acyl-carrier-protein]: step 1/2. Its function is as follows. Catalyzes the transfer of endogenously produced octanoic acid from octanoyl-acyl-carrier-protein onto the lipoyl domains of lipoate-dependent enzymes. Lipoyl-ACP can also act as a substrate although octanoyl-ACP is likely to be the physiological substrate. The polypeptide is Octanoyltransferase (Thermobifida fusca (strain YX)).